Consider the following 387-residue polypeptide: Phosphoglycerate kinase (387 aa).

Residues aspartate 21–asparagine 23, arginine 36, histidine 59–arginine 62, arginine 113, and arginine 146 each bind substrate. ATP is bound by residues lysine 197, glutamate 314, and glycine 340–threonine 343.

This sequence belongs to the phosphoglycerate kinase family. Monomer.

It is found in the cytoplasm. It catalyses the reaction (2R)-3-phosphoglycerate + ATP = (2R)-3-phospho-glyceroyl phosphate + ADP. It participates in carbohydrate degradation; glycolysis; pyruvate from D-glyceraldehyde 3-phosphate: step 2/5. This chain is Phosphoglycerate kinase, found in Pseudomonas putida (strain ATCC 700007 / DSM 6899 / JCM 31910 / BCRC 17059 / LMG 24140 / F1).